The chain runs to 50 residues: Kappa-actitoxin-Bcs4a (50 aa).

This sequence belongs to the sea anemone type 5 potassium channel toxin family. Contains 4 disulfide bonds.

The protein resides in the secreted. It localises to the nematocyst. Inhibits voltage-gated potassium channels (Kv1/KCNA). Is potent on Drosophila Shaker IR channels (IC(50)=94.25 nM), and rKv1.2/KCNA2 (IC(50)=172.59 nM), and moderately active on hKv1.3/KCNA3 (IC(50)=1006.48 nM), rKv1.6/KCNA6 (IC(50)=2245.93 nM), and Kv1.1/KCNA1 (IC(50) around 3 uM). In vivo, induces a rapid increase in swimming speed on zebrafish larvae, as well as death which occurs between 2 and 18 hours later. Also paralyzes swimming crabs (C.danae) when injected at the junction between the body and the walking leg. In Bunodosoma caissarum (Sea anemone), this protein is Kappa-actitoxin-Bcs4a.